The following is a 477-amino-acid chain: Aspartyl/glutamyl-tRNA(Asn/Gln) amidotransferase subunit B (477 aa).

Belongs to the GatB/GatE family. GatB subfamily. In terms of assembly, heterotrimer of A, B and C subunits.

It catalyses the reaction L-glutamyl-tRNA(Gln) + L-glutamine + ATP + H2O = L-glutaminyl-tRNA(Gln) + L-glutamate + ADP + phosphate + H(+). The enzyme catalyses L-aspartyl-tRNA(Asn) + L-glutamine + ATP + H2O = L-asparaginyl-tRNA(Asn) + L-glutamate + ADP + phosphate + 2 H(+). Its function is as follows. Allows the formation of correctly charged Asn-tRNA(Asn) or Gln-tRNA(Gln) through the transamidation of misacylated Asp-tRNA(Asn) or Glu-tRNA(Gln) in organisms which lack either or both of asparaginyl-tRNA or glutaminyl-tRNA synthetases. The reaction takes place in the presence of glutamine and ATP through an activated phospho-Asp-tRNA(Asn) or phospho-Glu-tRNA(Gln). In Lactococcus lactis subsp. cremoris (strain SK11), this protein is Aspartyl/glutamyl-tRNA(Asn/Gln) amidotransferase subunit B.